Here is an 844-residue protein sequence, read N- to C-terminus: Prickle-like protein 2 (844 aa).

A PET domain is found at 18–126 (FDFQRNSTSD…NVRPFPVTMT (109 aa)). A Phosphoserine modification is found at serine 92. LIM zinc-binding domains lie at 128 to 193 (AICE…CLKP), 193 to 253 (PRCA…LYAE), and 253 to 317 (EYCD…EDPN). Disordered stretches follow at residues 314–350 (EDPN…TEEP) and 481–519 (ESYS…QQCR). Over residues 318–327 (GSDSSDSAFQ) the composition is skewed to polar residues. Phosphoserine is present on residues serine 319, serine 321, and serine 322. The span at 481-493 (ESYSDMSSQSFSE) shows a compositional bias: low complexity. Phosphothreonine occurs at positions 534, 536, and 539. Phosphoserine is present on residues serine 543, serine 546, serine 607, and serine 642. Residues 639–709 (MHQSFDFDGG…HLASEREAIS (71 aa)) form a disordered region. Residues 682-692 (FRPHRSRRSRR) are compositionally biased toward basic residues. Residues 693-709 (SRSDNALHLASEREAIS) are compositionally biased toward basic and acidic residues. A Phosphoserine modification is found at serine 731. The interval 822 to 844 (STLGGRGQLHSRKRQKSKNCIIS) is disordered. The residue at position 841 (cysteine 841) is a Cysteine methyl ester. Cysteine 841 carries the S-farnesyl cysteine lipid modification. Positions 842 to 844 (IIS) are cleaved as a propeptide — removed in mature form.

This sequence belongs to the prickle / espinas / testin family. In terms of tissue distribution, expressed in brain, eye and testis. Additionally in fetal brain, adult cartilage, pancreatic islet, gastric cancer and uterus tumors.

The protein resides in the nucleus membrane. The chain is Prickle-like protein 2 (PRICKLE2) from Homo sapiens (Human).